We begin with the raw amino-acid sequence, 1351 residues long: Tripartite motif-containing protein 66 (1351 aa).

A B box-type 1; atypical zinc finger spans residues 105 to 150 (MARNCSECKEKRAAHILCTYCNRWLCSSCTEEHRHSPVPGGPFFPR). The Zn(2+) site is built by Cys109, Cys112, Cys133, His139, Cys169, His172, Cys192, and His197. Residues 164–205 (DFTLYCPLHTQEVLKLFCETCDMLTCHSCLVVEHKEHRCRHV) form a B box-type 2 zinc finger. The stretch at 234–304 (AKQIEDRIFE…IMVLNRQFEH (71 aa)) forms a coiled coil. 3 disordered regions span residues 542–608 (FGHH…CSQN), 663–730 (APVQ…VRKH), and 857–895 (CPLQSIPPVSDMQPETGSSSSSGRTSGSLCPRDGADPSL). Pro residues predominate over residues 560 to 588 (QLPPPPPPLPHPPPPLPPPPQQPHPPLPP). A compositionally biased stretch (polar residues) spans 664–676 (PVQSQSQEETLQA). The span at 872–884 (TGSSSSSGRTSGS) shows a compositional bias: low complexity. The PxVxL motif motif lies at 995–999 (PYVRL). The interval 1067–1098 (TSLAGQRPPEVEGTSPEEHRLIPRTPGAKKGP) is disordered. Residues 1105–1152 (EDFCAVCLNGGELLCCDRCPKVFHLSCHVPALLSFPGGEWVCTLCRSL) form a PHD-type zinc finger. One can recognise a Bromo domain in the interval 1176 to 1282 (GLSMYDQKKC…VFFEGWLKEI (107 aa)). The interval 1289–1351 (AQPRQEDSDS…FRLANSISQV (63 aa)) is disordered.

Can form homodimers and heterodimers. Interacts with CBX5, CBX1 and CBX3 via PxVxL motif.

Its subcellular location is the nucleus. Its function is as follows. May function as transcription repressor; The repressive effects are mediated, at least in part, by recruitment of deacetylase activity. May play a role as negative regulator of postmeiotic genes acting through CBX3 complex formation and centromere association. The chain is Tripartite motif-containing protein 66 (TRIM66) from Homo sapiens (Human).